Reading from the N-terminus, the 261-residue chain is V-type proton ATPase subunit D (261 aa).

Residue serine 241 is modified to Phosphoserine.

It belongs to the V-ATPase D subunit family. In terms of assembly, V-ATPase is a heteromultimeric enzyme composed of a peripheral catalytic V1 complex (components A to H) attached to an integral membrane V0 proton pore complex (components: a, c, c'', d and e).

Its subcellular location is the vacuole membrane. Its function is as follows. Subunit of the peripheral V1 complex of vacuolar ATPase. V-ATPase is responsible for acidifying a variety of intracellular compartments in eukaryotic cells, thus providing most of the energy required for transport processes in the vacuolar system. The polypeptide is V-type proton ATPase subunit D (VHA-D) (Arabidopsis thaliana (Mouse-ear cress)).